The sequence spans 392 residues: Iripin-4 (392 aa).

The N-terminal stretch at 1–16 (MRSLATFMSLLTICWG) is a signal peptide. Residues Asn104, Asn130, and Asn265 are each glycosylated (N-linked (GlcNAc...) asparagine).

The protein belongs to the serpin family. Female salivary gland.

The protein localises to the secreted. Serpin with unknown function. Weakly inhibits human granzyme B (GZMB). Acts as a substrate for porcine elastase. The sequence is that of Iripin-4 from Ixodes ricinus (Common tick).